We begin with the raw amino-acid sequence, 310 residues long: Junctional adhesion molecule C (310 aa).

The N-terminal stretch at 1-31 (MALSRRLRLRLCARLPDFFLLLLFRGCVIEA) is a signal peptide. The Extracellular segment spans residues 32 to 241 (VNLKSSNRNP…GQDMEVYDLN (210 aa)). The Ig-like V-type domain maps to 35 to 127 (KSSNRNPVVH…VALNDRKEVD (93 aa)). Intrachain disulfides connect Cys-53/Cys-115 and Cys-160/Cys-219. N-linked (GlcNAc...) asparagine glycosylation is found at Asn-104 and Asn-192. In terms of domain architecture, Ig-like C2-type spans 139–236 (PVAPVCRVPK…AARCEGQDME (98 aa)). A helical membrane pass occupies residues 242 to 262 (IAGIIGGVLVVLIVLAVITMG). Topologically, residues 263–310 (ICCAYRRGCFISSKQDGESYKSPGKHEGVNYIRTSEEGDFRHKSSFVI) are cytoplasmic. S-palmitoyl cysteine attachment occurs at residues Cys-264 and Cys-265.

It belongs to the immunoglobulin superfamily. As to quaternary structure, interacts with ITGAM. Interacts with GORASP2. In terms of processing, proteolytically cleaved from endothelial cells surface into a soluble form by ADAM10 and ADAM17; the release of soluble JAM3 is increased by pro-inflammatory factors. S-palmitoylated by ZDHHC7. S-palmitoylation promotes expression at tight junctions.

It localises to the cell membrane. Its subcellular location is the cell junction. The protein localises to the desmosome. The protein resides in the tight junction. It is found in the secreted. Junctional adhesion protein that mediates heterotypic cell-cell interactions with its cognate receptor JAM2 to regulate different cellular processes. Plays a role in homing and mobilization of hematopoietic stem and progenitor cells within the bone marrow. At the surface of bone marrow stromal cells, it contributes to the retention of the hematopoietic stem and progenitor cells expressing JAM3. Plays a central role in leukocytes extravasation by facilitating transmigration through the endothelium. Plays a role in spermatogenesis where JAM2 and JAM3, which are respectively expressed by Sertoli and germ cells, mediate an interaction between both cell types and play an essential role in the anchorage of germ cells onto Sertoli cells and the assembly of cell polarity complexes during spermatid differentiation. Also functions as a counter-receptor for ITGAM, mediating leukocyte-platelet interactions and is involved in the regulation of transepithelial migration of polymorphonuclear neutrophils (PMN). Plays a role in angiogenesis. Plays a role in the regulation of cell migration. During myogenesis, it is involved in myocyte fusion. Functionally, promotes chemotaxis of vascular endothelial cells and stimulates angiogenesis. The polypeptide is Junctional adhesion molecule C (Jam3) (Rattus norvegicus (Rat)).